Reading from the N-terminus, the 420-residue chain is Reticulon-4 receptor-like 2 (420 aa).

Positions 1–46 are cleaved as a signal peptide; it reads MLPGLRRLLQAPASACLLLMLLALPLAAPSCPMLCTCYSSPPTVSC. 2 disulfides stabilise this stretch: Cys-31/Cys-37 and Cys-35/Cys-46. The 14-residue stretch at 47–60 folds into the LRRNT domain; that stretch reads QANNFSSVPLSLPP. A glycan (N-linked (GlcNAc...) asparagine) is linked at Asn-50. LRR repeat units lie at residues 61 to 82, 83 to 104, 107 to 129, 132 to 153, 156 to 177, 180 to 201, 204 to 225, and 228 to 249; these read STQRLFLQNNLIRTLRPGTFGS, NLLTLWLFSNNLSTIYPGTFRH, ALEELDLGDNRHLRSLEPDTFQG, RLQSLHLYRCQLSSLPGNIFRG, SLQYLYLQENSLLHLQDDLFAD, NLSHLFLHGNRLRLLTEHVFRG, SLDRLLLHGNRLQGVHRAAFRG, and RLTILYLFNNSLASLPGEALAD. N-linked (GlcNAc...) asparagine glycosylation is present at Asn-93. Asn-236 carries an N-linked (GlcNAc...) asparagine glycan. Residues 261–312 enclose the LRRCT domain; that stretch reads NPWACDCRARPLWAWFQRARVSSSDVTCATPPERQGRDLRALREADFQACPP. Intrachain disulfides connect Cys-265-Cys-288 and Cys-267-Cys-310. Residues 308–399 form a disordered region; sequence QACPPAAPTR…CQAPPDSRGP (92 aa). The tract at residues 315–327 is important for interaction with MAG; the sequence is PTRPGSRARGNSS. Basic and acidic residues predominate over residues 351 to 360; the sequence is LPAEDSRGRQ. Cys-390 is lipidated: GPI-anchor amidated cysteine. The propeptide at 391-420 is removed in mature form; sequence QAPPDSRGPALSAGLPSPLLCLLLLVPHHL.

It belongs to the Nogo receptor family. In terms of assembly, interaction with MAG is controversial, and may be indirect. Does not interact with MAG, OMG and RTN4. Interacts with MAG. Undergoes zinc metalloproteinase-mediated ectodomain shedding in neuroblastoma cells; is released both as a full-length ectodomain and an N-terminal fragment containing the leucine-rich repeat (LRR) region of the protein. In terms of processing, N-glycosylated. In terms of tissue distribution, highly expressed in brain and liver. Expressed at lower levels in kidney, mammary gland, placenta, skeletal muscle, spleen and thyroid.

Its subcellular location is the cell membrane. It is found in the membrane raft. It localises to the cell projection. The protein localises to the dendrite. The protein resides in the perikaryon. Its subcellular location is the axon. Its function is as follows. Cell surface receptor that plays a functionally redundant role in the inhibition of neurite outgrowth mediated by MAG. Plays a functionally redundant role in postnatal brain development. Contributes to normal axon migration across the brain midline and normal formation of the corpus callosum. Does not seem to play a significant role in regulating axon regeneration in the adult central nervous system. Protects motoneurons against apoptosis; protection against apoptosis is probably mediated by MAG. Like other family members, plays a role in restricting the number dendritic spines and the number of synapses that are formed during brain development. Signaling mediates activation of Rho and downstream reorganization of the actin cytoskeleton. The sequence is that of Reticulon-4 receptor-like 2 from Homo sapiens (Human).